A 633-amino-acid polypeptide reads, in one-letter code: Extracellular metalloproteinase mep (633 aa).

Positions 1–18 (MRLLSLAGAMALPLCVLA) are cleaved as a signal peptide. A propeptide spanning residues 19-244 (HPTHRTRGIA…IHGVVDYISD (226 aa)) is cleaved from the precursor. A glycan (N-linked (GlcNAc...) asparagine) is linked at asparagine 326. Histidine 428 provides a ligand contact to Zn(2+). The active site involves glutamate 429. Histidine 432 contributes to the Zn(2+) binding site. N-linked (GlcNAc...) asparagine glycosylation occurs at asparagine 514.

The protein belongs to the peptidase M36 family. Zn(2+) is required as a cofactor.

The protein resides in the secreted. In terms of biological role, secreted metalloproteinase that allows assimilation of proteinaceous substrates. This is Extracellular metalloproteinase mep (mep) from Aspergillus terreus (strain NIH 2624 / FGSC A1156).